A 305-amino-acid polypeptide reads, in one-letter code: N-acetyl-D-glucosamine kinase (305 aa).

ATP-binding positions include 4–11 (GFDIGGTK) and 133–140 (GFGGGLVF). Residues H157, C178, C180, and C185 each contribute to the Zn(2+) site.

The protein belongs to the ROK (NagC/XylR) family. NagK subfamily.

It carries out the reaction N-acetyl-D-glucosamine + ATP = N-acetyl-D-glucosamine 6-phosphate + ADP + H(+). It functions in the pathway cell wall biogenesis; peptidoglycan recycling. Its function is as follows. Catalyzes the phosphorylation of N-acetyl-D-glucosamine (GlcNAc) derived from cell-wall degradation, yielding GlcNAc-6-P. The protein is N-acetyl-D-glucosamine kinase of Histophilus somni (strain 129Pt) (Haemophilus somnus).